The primary structure comprises 150 residues: Small heat shock protein HspE (150 aa).

The region spanning 27–137 (VDNGDTYPPY…KPRQIAIDVA (111 aa)) is the sHSP domain.

The protein belongs to the small heat shock protein (HSP20) family.

This chain is Small heat shock protein HspE (hspE), found in Bradyrhizobium diazoefficiens (strain JCM 10833 / BCRC 13528 / IAM 13628 / NBRC 14792 / USDA 110).